The sequence spans 1338 residues: Fanconi anemia group I protein (1338 aa).

A Glycyl lysine isopeptide (Lys-Gly) (interchain with G-Cter in ubiquitin) cross-link involves residue lysine 525. Serine 558 and serine 561 each carry phosphoserine. Phosphothreonine is present on threonine 567.

It belongs to the Fanconi anemia group I protein family. Homodimer. Part of a FANCI-FANCD2 heterodimeric complex that binds and scans dsDNA for DNA damage. Interacts with FANCL. Interacts with MTMR15/FAN1. Interacts with POLN. Interacts with UBL5; the interaction promotes FANCI homodimerization. In terms of processing, monoubiquitinated by FANCL during S phase and upon genotoxic stress. Deubiquitinated by USP1 as cells enter G2/M, or once DNA repair is completed. Monoubiquitination requires the FANCA-FANCB-FANCC-FANCE-FANCF-FANCG-FANCM complex. Ubiquitination is required for binding to chromatin, DNA repair, and normal cell cycle progression. Monoubiquitination is stimulated by DNA-binding. Post-translationally, phosphorylated in response to DNA damage by ATM and/or ATR. Phosphorylation of FANCI promotes ubiquitination of FANCD2, which prevents DNA release from the FANCI-FANCD2 complex.

Its function is as follows. Plays an essential role in the repair of DNA double-strand breaks by homologous recombination and in the repair of interstrand DNA cross-links (ICLs) by promoting FANCD2 monoubiquitination by FANCL and participating in recruitment to DNA repair sites. The FANCI-FANCD2 complex binds and scans double-stranded DNA (dsDNA) for DNA damage; this complex stalls at DNA junctions between double-stranded DNA and single-stranded DNA. Participates in S phase and G2 phase checkpoint activation upon DNA damage. The polypeptide is Fanconi anemia group I protein (Gallus gallus (Chicken)).